We begin with the raw amino-acid sequence, 331 residues long: MAQLFYDSDADLGLLNGKTVAIIGYGSQGHAHALNLKDSGVNVVVGLYDGSRSAEKAKADGLEVLSVADASAKADWIMVLLPDEFQKDVYEKEIAPHLNAGKVLSFAHGFNIRFELIKPPADVDVVMIAPKGPGHTVRWEYQNGQGVPALFAIEQDASGNARGMAMAYAKGIGGTRAGILETNFKEETETDLFGEQAVLCGGLSELVKAGFETLVEAGYQPELAYFECLHEVKLIVDLMVKGGLTSMRDSISNTAEYGDYVSGPRLITADTKAEMKRVLADIQDGTFARNFVAECEAGKPEMKKVRDRDSQHPIEKVGKGLRSMFSWLKDA.

Residues 2–182 (AQLFYDSDAD…GGTRAGILET (181 aa)) form the KARI N-terminal Rossmann domain. Residues 25–28 (YGSQ), Ser-51, Ser-53, and 83–86 (DEFQ) each bind NADP(+). His-108 is a catalytic residue. Gly-134 lines the NADP(+) pocket. The KARI C-terminal knotted domain maps to 183 to 328 (NFKEETETDL…KGLRSMFSWL (146 aa)). Positions 191, 195, 227, and 231 each coordinate Mg(2+). Ser-252 provides a ligand contact to substrate.

It belongs to the ketol-acid reductoisomerase family. Mg(2+) is required as a cofactor.

The catalysed reaction is (2R)-2,3-dihydroxy-3-methylbutanoate + NADP(+) = (2S)-2-acetolactate + NADPH + H(+). It carries out the reaction (2R,3R)-2,3-dihydroxy-3-methylpentanoate + NADP(+) = (S)-2-ethyl-2-hydroxy-3-oxobutanoate + NADPH + H(+). Its pathway is amino-acid biosynthesis; L-isoleucine biosynthesis; L-isoleucine from 2-oxobutanoate: step 2/4. The protein operates within amino-acid biosynthesis; L-valine biosynthesis; L-valine from pyruvate: step 2/4. Involved in the biosynthesis of branched-chain amino acids (BCAA). Catalyzes an alkyl-migration followed by a ketol-acid reduction of (S)-2-acetolactate (S2AL) to yield (R)-2,3-dihydroxy-isovalerate. In the isomerase reaction, S2AL is rearranged via a Mg-dependent methyl migration to produce 3-hydroxy-3-methyl-2-ketobutyrate (HMKB). In the reductase reaction, this 2-ketoacid undergoes a metal-dependent reduction by NADPH to yield (R)-2,3-dihydroxy-isovalerate. This chain is Ketol-acid reductoisomerase (NADP(+)), found in Synechococcus sp. (strain CC9605).